The following is a 322-amino-acid chain: NADH-cytochrome b5 reductase 2 (322 aa).

A helical membrane pass occupies residues 30-46 (LAPVYVAVGLAGLGVGL). Residues 71 to 176 (QGWVNLKLSD…KGPLPKYPWE (106 aa)) form the FAD-binding FR-type domain. FAD is bound at residue 179–214 (KHKHICLVAGGTGITPMYQLAREIFKNPEDKTKVTL).

The protein belongs to the flavoprotein pyridine nucleotide cytochrome reductase family. Requires FAD as cofactor.

The protein resides in the mitochondrion outer membrane. It carries out the reaction 2 Fe(III)-[cytochrome b5] + NADH = 2 Fe(II)-[cytochrome b5] + NAD(+) + H(+). Its function is as follows. May mediate the reduction of outer membrane cytochrome b5. This Emericella nidulans (strain FGSC A4 / ATCC 38163 / CBS 112.46 / NRRL 194 / M139) (Aspergillus nidulans) protein is NADH-cytochrome b5 reductase 2 (mcr1).